A 616-amino-acid polypeptide reads, in one-letter code: 2-[(L-alanin-3-ylcarbamoyl)methyl]-3-(2-aminoethylcarbamoyl)-2-hydroxypropanoate synthase (616 aa).

Belongs to the IucA/IucC family. Forms a mixture of monomer and dimer in solution.

It carries out the reaction 2-[(2-aminoethylcarbamoyl)methyl]-2-hydroxybutanedioate + (S)-2,3-diaminopropanoate + ATP = 2-[(L-alanin-3-ylcarbamoyl)methyl]-3-(2-aminoethylcarbamoyl)-2-hydroxypropanoate + AMP + diphosphate. It functions in the pathway siderophore biosynthesis. Catalyzes the condensation of L-2,3-diaminopropionic acid (L-Dap) and citryl-diaminoethane to form L-2,3-diaminopropionyl-citryl-diaminoethane, the third step in staphyloferrin B biosynthesis. The polypeptide is 2-[(L-alanin-3-ylcarbamoyl)methyl]-3-(2-aminoethylcarbamoyl)-2-hydroxypropanoate synthase (Staphylococcus aureus (strain NCTC 8325 / PS 47)).